The following is a 40-amino-acid chain: Large ribosomal subunit protein bL36 (40 aa).

It belongs to the bacterial ribosomal protein bL36 family.

This chain is Large ribosomal subunit protein bL36, found in Corynebacterium aurimucosum (strain ATCC 700975 / DSM 44827 / CIP 107346 / CN-1) (Corynebacterium nigricans).